We begin with the raw amino-acid sequence, 78 residues long: UPF0270 protein YE3952 (78 aa).

Belongs to the UPF0270 family.

This chain is UPF0270 protein YE3952, found in Yersinia enterocolitica serotype O:8 / biotype 1B (strain NCTC 13174 / 8081).